The primary structure comprises 243 residues: Terpene cyclase ptmB (243 aa).

3 consecutive transmembrane segments (helical) span residues 19-39, 48-68, and 78-98; these read IANLFVLGMGLGWLINYVGMI, YGMAIMPLCCNIAWEIVYSLI, and GVFIAGLTINIGVMYAAIKFA. Residue Asn111 is glycosylated (N-linked (GlcNAc...) asparagine). Transmembrane regions (helical) follow at residues 112 to 132, 137 to 157, 172 to 194, and 205 to 225; these read LSLIFFLATLGFLTGHLALAA, SLAYSWGAVVCQLLLSVGGLC, LWLSRFLGSSCTVGFASLRWMYW, and LVLWSLALFLTVDGSYGICYW.

It belongs to the paxB family.

The protein localises to the membrane. It participates in secondary metabolite biosynthesis. In terms of biological role, terpene cyclase; part of the gene cluster that mediates the biosynthesis of the indole diterpenes penitrems. The geranylgeranyl diphosphate (GGPP) synthase ptmG catalyzes the first step in penitrem biosynthesis via conversion of farnesyl pyrophosphate and isopentyl pyrophosphate into geranylgeranyl pyrophosphate (GGPP). Condensation of indole-3-glycerol phosphate with GGPP by the prenyl transferase ptmC then forms 3-geranylgeranylindole (3-GGI). Epoxidation by the FAD-dependent monooxygenase ptmM leads to a epoxidized-GGI that is substrate of the terpene cyclase ptmB for cyclization to yield paspaline. Paspaline is subsequently converted to 13-desoxypaxilline by the cytochrome P450 monooxygenase ptmP, the latter being then converted to paxilline by the cytochrome P450 monooxygenase ptmQ. Paxilline is converted to beta-paxitriol via C-10 ketoreduction by the short-chain dehydrogenase ptmH which can be monoprenylated at the C-20 by the indole diterpene prenyltransferase ptmD. A two-step elimination (acetylation and elimination) process performed by the O-acetyltransferase ptmV and ptmI leads to the production of the prenylated form of penijanthine. The FAD-linked oxidoreductase ptmO then converts the prenylated form of penijanthine into PC-M5 which is in turn transformed into PC-M4 by the aromatic dimethylallyltransferase ptmE. Five sequential oxidative transformations performed by the cytochrome P450 monooxygenases ptmK, ptmU, ptmL, ptmN and ptmJ yield the various penitrem compounds. PtmK, ptmU and ptmM are involved in the formation of the key bicyclic ring of penitrem C via the formation of the intermediates secopenitrem D and penitrem D. PtmL catalyzes the epoxidation of penitrem D and C to yield penitrem B and F, respectively. PtmJ catalyzes the last benzylic hydroxylation to convert penitrem B to prenitrem E and penitrem F to penitrem A. The sequence is that of Terpene cyclase ptmB from Penicillium ochrochloron.